A 1133-amino-acid polypeptide reads, in one-letter code: Fas-binding factor 1 (1133 aa).

Disordered regions lie at residues 89–198 and 211–544; these read LGLK…TPIR and IMAT…VPVQ. A compositionally biased stretch (basic and acidic residues) spans 102-113; the sequence is AAKDPGKGELPN. A compositionally biased stretch (low complexity) spans 125-134; sequence KKSLPSPSSS. Residue serine 142 is modified to Phosphoserine. Over residues 165-182 the composition is skewed to polar residues; that stretch reads PPVTQSKTASDKSPSTVR. Basic and acidic residues-rich tracts occupy residues 221–245 and 259–276; these read PKAEKRQIGDQEGPRPARSTLDELL and TGEHREFKLDKKYQRPQD. The span at 277-286 shows a compositional bias: acidic residues; the sequence is SEDMWGDEDF. Residues 295–310 show a composition bias toward low complexity; sequence VVSSEGRQSRRQSVSR. Over residues 325 to 336 the composition is skewed to polar residues; the sequence is SKQSPPMASSPI. Positions 415-424 are enriched in basic and acidic residues; sequence ASKEEKEDWL. Residues 459 to 469 show a composition bias toward polar residues; the sequence is SGSQPLTSTQG. Positions 473–482 are enriched in low complexity; the sequence is AAAGGSSGTT. Coiled-coil stretches lie at residues 577 to 727 and 773 to 870; these read AELQ…VDAA and IRQR…EEQK. Lysine 960 participates in a covalent cross-link: Glycyl lysine isopeptide (Lys-Gly) (interchain with G-Cter in SUMO2). The segment at 1062-1085 is disordered; sequence AASSQSALMPPAPTTRWCSQPPTG.

May interact with FAS cytoplasmic domain. Interacts with PARD3. Interacts with TRAPPC14. In terms of tissue distribution, present in various epithelial cells (at protein level).

It localises to the cytoplasm. Its subcellular location is the cytoskeleton. The protein localises to the microtubule organizing center. The protein resides in the centrosome. It is found in the centriole. It localises to the spindle pole. Its subcellular location is the cell junction. In terms of biological role, keratin-binding protein required for epithelial cell polarization. Involved in apical junction complex (AJC) assembly via its interaction with PARD3. Required for ciliogenesis. The protein is Fas-binding factor 1 (FBF1) of Homo sapiens (Human).